Here is a 177-residue protein sequence, read N- to C-terminus: DELTA-stichotoxin-Hmg2b (177 aa).

The segment at 3 to 12 (ALAGTIIAGA) is plays an important role in the hemolytic activity. The interval 11-30 (GASLGFQILDKVLGELGKVS) is N-terminal region. Phosphocholine-binding residues include S54, V87, S105, P107, Y133, Y137, and Y138.

Belongs to the actinoporin family. Sea anemone subfamily. In terms of assembly, octamer or nonamer in membranes. Monomer in the soluble state.

The protein localises to the secreted. It localises to the nematocyst. Its subcellular location is the target cell membrane. Pore-forming protein that forms cations-selective hydrophilic pores of around 1 nm and causes cytolysis. Pore formation is a multi-step process that involves specific recognition of membrane sphingomyelin (but neither cholesterol nor phosphatidylcholine) using aromatic rich region and adjacent phosphocholine (POC) binding site, firm binding to the membrane (mainly driven by hydrophobic interactions) accompanied by the transfer of the N-terminal region to the lipid-water interface and finally pore formation after oligomerization of monomers This toxin shows hemolytic activity. The protein is DELTA-stichotoxin-Hmg2b of Heteractis magnifica (Magnificent sea anemone).